Consider the following 215-residue polypeptide: Large ribosomal subunit protein uL4 (215 aa).

The segment at 43-97 (RRQGTHSTKTRAEVSGGGKKPWRQKGTGRARAGSTRSPIWVGGGKTHTPKPRDYS) is disordered.

It belongs to the universal ribosomal protein uL4 family. Part of the 50S ribosomal subunit.

In terms of biological role, one of the primary rRNA binding proteins, this protein initially binds near the 5'-end of the 23S rRNA. It is important during the early stages of 50S assembly. It makes multiple contacts with different domains of the 23S rRNA in the assembled 50S subunit and ribosome. Its function is as follows. Forms part of the polypeptide exit tunnel. The sequence is that of Large ribosomal subunit protein uL4 from Brachyspira pilosicoli (Serpulina pilosicoli).